Here is a 328-residue protein sequence, read N- to C-terminus: Lactamase-like protein nscB (328 aa).

The Zn(2+) site is built by His-97, His-99, Asp-101, and His-102. Catalysis depends on Asp-101, which acts as the Proton donor/acceptor.

This sequence belongs to the metallo-beta-lactamase superfamily. The cofactor is Zn(2+).

It functions in the pathway secondary metabolite biosynthesis. Its function is as follows. Lactamase-like protein; part of the gene cluster that mediates the biosynthesis of neosartoricin, a prenylated anthracenone that exhibits T-cell antiproliferative activity, suggestive of a physiological role as an immunosuppressive agent. The non-reducing polyketide synthase nscA probably synthesizes and cyclizes the decaketide backbone. The hydrolase nscB then mediates the product release through hydrolysis followed by spontaneous decarboxylation. The prenyltransferase nscD catalyzes the addition of the dimethylallyl group to the aromatic C5. The FAD-dependent monooxygenase nscC is then responsible for the stereospecific hydroxylation at C2. There is no gene encoding O-acetyltransferase in the nsc gene cluster; thus, the last step of 2-O-acetylation leading to neosartoricin may be catalyzed by an unidentified O-acetyltransferase. The polypeptide is Lactamase-like protein nscB (Neosartorya fischeri (strain ATCC 1020 / DSM 3700 / CBS 544.65 / FGSC A1164 / JCM 1740 / NRRL 181 / WB 181) (Aspergillus fischerianus)).